The chain runs to 499 residues: MTTKQPTRFEAVIGIETHVQLNSRTKAFCRCAYEYGAEPNTRVCPTCMGHPGTLPVLNSAVVKKGIAIGTALGAKIRRTSKFDRKQYFYPDLPKGYQISQFDEPLCYDGSIDVVLPVEDGGEVKRVGITRAHLEEDAGKLTHAKGEDGKKYSYADFNRAGVALLEIVTEPDLRTGREVAAYGSELRRIVRFLDACDGDMSRGSMRNDVNVSIRPVGRERFGTKVEVKNMNSFNAMARAIDYEIARQEELIRSGRGDEIVQETRTWDEAAQKTVAMRKKEGLADYRYFPEPDIPKLRLSEEFISNVVASMPELPSMVRARYAALGLPPADVQVLVEDKELVTYFDAALSSSAKPSAKQVANWLTGDIMAHLKNSKMENVSQLPLSPEALGEFCAMIDAGEISGKIGKDLLPELLEKGGSAKKLVADRGLSQVSDPREIEALVDGVLEANAGQLEQYRAGKTKLKGFFVGACLKASGGRANPSLVDRILQAKLDGVPIDVA.

It belongs to the GatB/GatE family. GatB subfamily. In terms of assembly, subunit of the heterotrimeric GatCAB amidotransferase (AdT) complex, composed of A, B and C subunits.

The protein localises to the mitochondrion. The protein resides in the plastid. Its subcellular location is the chloroplast. It catalyses the reaction L-glutamyl-tRNA(Gln) + L-glutamine + ATP + H2O = L-glutaminyl-tRNA(Gln) + L-glutamate + ADP + phosphate + H(+). Allows the formation of correctly charged Gln-tRNA(Gln) through the transamidation of misacylated Glu-tRNA(Gln) in chloroplasts and mitochondria. The reaction takes place in the presence of glutamine and ATP through an activated gamma-phospho-Glu-tRNA(Gln). This chain is Glutamyl-tRNA(Gln) amidotransferase subunit B, chloroplastic/mitochondrial, found in Ostreococcus lucimarinus (strain CCE9901).